The chain runs to 1183 residues: Probable RNA-dependent RNA polymerase 4 (1183 aa).

Belongs to the RdRP family. In terms of tissue distribution, expressed in shoot apical meristem (SAM) and panicles.

The catalysed reaction is RNA(n) + a ribonucleoside 5'-triphosphate = RNA(n+1) + diphosphate. Its function is as follows. Probably involved in the RNA silencing pathway and required for the generation of small interfering RNAs (siRNAs). The sequence is that of Probable RNA-dependent RNA polymerase 4 (RDR4) from Oryza sativa subsp. japonica (Rice).